The following is a 141-amino-acid chain: Light-regulated protein 1, chloroplastic (141 aa).

A chloroplast-targeting transit peptide spans 1–41; the sequence is MQGALFIKPTILLPLPSSVSSPKLTFLLPHATKASRLSSLR. The span at 35 to 51 shows a compositional bias: low complexity; it reads SRLSSLRSNNSSSSSSL. Residues 35–58 form a disordered region; sequence SRLSSLRSNNSSSSSSLTSDPNTV. The 2 X 15 AA approximate repeats stretch occupies residues 58–132; the sequence is VDYNSSILSV…ACDDLGGEFC (75 aa). Repeat copies occupy residues 67-81 and 118-132.

In terms of assembly, component of high molecular weight thylakoid LFNRs-containing protein complexes containing LIR1, LFNR1, LFNR2, TIC62 and TROL proteins. Interacts directly with LFNR1 and LFNR2; LIR1 increases the affinity of LFNR1 and LFNR2 for TIC62 and subsequent thylakoid relocalization. Post-translationally, may form interchain disulfide bonds with LFNR1 and LFNR2.

It localises to the plastid. Its subcellular location is the chloroplast thylakoid membrane. It is found in the chloroplast envelope. The protein localises to the chloroplast stroma. In terms of biological role, thylakoid-determinant subunit of high molecular weight LFNRs-containing protein complexes. This Arabidopsis thaliana (Mouse-ear cress) protein is Light-regulated protein 1, chloroplastic.